Consider the following 308-residue polypeptide: NAD kinase (308 aa).

The active-site Proton acceptor is the Asp-86. NAD(+)-binding positions include 86-87 (DG), Arg-91, 160-161 (NE), Asp-190, and 201-206 (TAYAFS).

The protein belongs to the NAD kinase family. The cofactor is a divalent metal cation.

Its subcellular location is the cytoplasm. It carries out the reaction NAD(+) + ATP = ADP + NADP(+) + H(+). In terms of biological role, involved in the regulation of the intracellular balance of NAD and NADP, and is a key enzyme in the biosynthesis of NADP. Catalyzes specifically the phosphorylation on 2'-hydroxyl of the adenosine moiety of NAD to yield NADP. This Mycolicibacterium paratuberculosis (strain ATCC BAA-968 / K-10) (Mycobacterium paratuberculosis) protein is NAD kinase.